The primary structure comprises 159 residues: NADH-quinone oxidoreductase subunit I (159 aa).

4Fe-4S ferredoxin-type domains follow at residues 51–80 (RRYE…IEAD) and 90–119 (TRYD…EGPN). The [4Fe-4S] cluster site is built by C60, C63, C66, C70, C99, C102, C105, and C109.

The protein belongs to the complex I 23 kDa subunit family. In terms of assembly, NDH-1 is composed of 14 different subunits. Subunits NuoA, H, J, K, L, M, N constitute the membrane sector of the complex. [4Fe-4S] cluster serves as cofactor.

The protein resides in the cell inner membrane. The enzyme catalyses a quinone + NADH + 5 H(+)(in) = a quinol + NAD(+) + 4 H(+)(out). Its function is as follows. NDH-1 shuttles electrons from NADH, via FMN and iron-sulfur (Fe-S) centers, to quinones in the respiratory chain. The immediate electron acceptor for the enzyme in this species is believed to be ubiquinone. Couples the redox reaction to proton translocation (for every two electrons transferred, four hydrogen ions are translocated across the cytoplasmic membrane), and thus conserves the redox energy in a proton gradient. This Rickettsia massiliae (strain Mtu5) protein is NADH-quinone oxidoreductase subunit I.